The primary structure comprises 332 residues: Multiple virulence factor regulator MvfR (332 aa).

The HTH lysR-type domain maps to 4-61 (HNLNHVNMFLQVIASGSISSAARILRKSHTAVSSAVSNLEIDLCVELVRRDGYKVEPT). A DNA-binding region (H-T-H motif) is located at residues 21–40 (ISSAARILRKSHTAVSSAVS).

This sequence belongs to the LysR transcriptional regulatory family. Forms homooligomers.

The protein resides in the cell inner membrane. It localises to the secreted. With respect to regulation, both 3,4-dihydroxy-2-heptylquinoline (PQS) and its precursor 4-hydroxy-2-heptylquinoline (HHQ) function as ligands and promote MvfR DNA-binding activity leading to transcriptional activation. Functionally, transcription regulator that plays a critical role in virulence by positively regulating the expression of multiple quorum sensing (QS)-regulated virulence factors, genes involved in protein secretion, translation, response to oxidative stress and the phnAB operon. At the stationary phase, negatively autoregulates its function through cleavage and translocation to the extracellular space. This chain is Multiple virulence factor regulator MvfR, found in Pseudomonas aeruginosa (strain ATCC 15692 / DSM 22644 / CIP 104116 / JCM 14847 / LMG 12228 / 1C / PRS 101 / PAO1).